The sequence spans 447 residues: Phosphoglucosamine mutase (447 aa).

Ser104 serves as the catalytic Phosphoserine intermediate. Residues Ser104, Asp243, Asp245, and Asp247 each coordinate Mg(2+). Ser104 carries the phosphoserine modification.

It belongs to the phosphohexose mutase family. Mg(2+) is required as a cofactor. Activated by phosphorylation.

The enzyme catalyses alpha-D-glucosamine 1-phosphate = D-glucosamine 6-phosphate. Its function is as follows. Catalyzes the conversion of glucosamine-6-phosphate to glucosamine-1-phosphate. The chain is Phosphoglucosamine mutase from Corynebacterium diphtheriae (strain ATCC 700971 / NCTC 13129 / Biotype gravis).